A 790-amino-acid polypeptide reads, in one-letter code: Probable copper-transporting ATPase SynA (790 aa).

Over 1–105 (MPAAIVHSAD…IPPLQQQRLQ (105 aa)) the chain is Cytoplasmic. Residues 14-81 (TSILVEVEGM…EITGLGFRAQ (68 aa)) enclose the HMA domain. Residues Cys25 and Cys28 each coordinate Cu cation. A helical membrane pass occupies residues 106–125 (LAIAAFLLIVSSWGHLGHWL). Residues 126-134 (DHPLPGTDQ) are Extracellular-facing. A helical membrane pass occupies residues 135–154 (LWFHALLAIWALLGPGRSIL). Residues 155–166 (QAGWQGLRCGAP) lie on the Cytoplasmic side of the membrane. A helical membrane pass occupies residues 167–189 (NMNSLVLLGTGSAYLASLVALLW). Residues 190–193 (PQLG) lie on the Extracellular side of the membrane. The helical transmembrane segment at 194-211 (WVCFLDEPVMLLGFILLG) threads the bilayer. Residues 212 to 357 (RTLEEQARFR…RKAPVQRFAD (146 aa)) lie on the Cytoplasmic side of the membrane. The helical transmembrane segment at 358–380 (AIAGRFVYGVCAIAALTFGFWAT) threads the bilayer. The Extracellular segment spans residues 381-416 (LGSRWWPQVLQQPLPGLLIHAPHHGMEMAHPHSHSP). The chain crosses the membrane as a helical span at residues 417 to 439 (LLLALTLAISVLVVACPCALGLA). Over 440-726 (TPTAILVATG…QMGLRTIRQN (287 aa)) the chain is Cytoplasmic. Catalysis depends on Asp476, which acts as the 4-aspartylphosphate intermediate. Positions 669 and 673 each coordinate Mg(2+). The helical transmembrane segment at 727–749 (LTWALGYNVVMLPLAAGAFLPAY) threads the bilayer. At 750 to 753 (GLAL) the chain is on the extracellular side. Residues 754 to 776 (TPAIAGACMAVSSLAVVSNSLLL) form a helical membrane-spanning segment. Residues 777 to 790 (RYWFRRSLNHSVSV) are Cytoplasmic-facing.

The protein belongs to the cation transport ATPase (P-type) (TC 3.A.3) family. Type IB subfamily.

The protein localises to the cell membrane. The catalysed reaction is Cu(2+)(in) + ATP + H2O = Cu(2+)(out) + ADP + phosphate + H(+). In terms of biological role, involved in copper transport. This is Probable copper-transporting ATPase SynA (synA) from Synechococcus sp. (strain ATCC 27144 / PCC 6301 / SAUG 1402/1) (Anacystis nidulans).